Reading from the N-terminus, the 130-residue chain is Small ribosomal subunit protein uS9 (130 aa).

This sequence belongs to the universal ribosomal protein uS9 family.

This is Small ribosomal subunit protein uS9 from Variovorax paradoxus (strain S110).